We begin with the raw amino-acid sequence, 598 residues long: tRNA(Met) cytidine acetyltransferase TmcA (598 aa).

Residues Gln-141, 163–172, and Arg-288 each bind ATP; that span reads GRGKSTLAGK. Positions 332–490 constitute an N-acetyltransferase domain; it reads TDLRRLFDAD…HSAMMLYPLS (159 aa). Residues 411-413, 418-424, and Arg-462 each bind acetyl-CoA; these read IAV and QNQGIGS.

Belongs to the RNA cytidine acetyltransferase family. TmcA subfamily.

The protein resides in the cytoplasm. It catalyses the reaction cytidine(34) in elongator tRNA(Met) + acetyl-CoA + ATP + H2O = N(4)-acetylcytidine(34) in elongator tRNA(Met) + ADP + phosphate + CoA + H(+). In terms of biological role, catalyzes the formation of N(4)-acetylcytidine (ac(4)C) at the wobble position of tRNA(Met), by using acetyl-CoA as an acetyl donor and ATP (or GTP). This is tRNA(Met) cytidine acetyltransferase TmcA from Haemophilus ducreyi (strain 35000HP / ATCC 700724).